The sequence spans 469 residues: UDP-N-acetylmuramate--L-alanine ligase (469 aa).

114–120 (GTHGKTT) serves as a coordination point for ATP.

Belongs to the MurCDEF family.

The protein resides in the cytoplasm. The enzyme catalyses UDP-N-acetyl-alpha-D-muramate + L-alanine + ATP = UDP-N-acetyl-alpha-D-muramoyl-L-alanine + ADP + phosphate + H(+). The protein operates within cell wall biogenesis; peptidoglycan biosynthesis. Functionally, cell wall formation. The polypeptide is UDP-N-acetylmuramate--L-alanine ligase (Sinorhizobium fredii (strain NBRC 101917 / NGR234)).